Consider the following 39-residue polypeptide: Cytochrome b559 subunit beta (39 aa).

A helical membrane pass occupies residues 14 to 30; it reads WLAIHGLAVPTVFFLGS. His18 contacts heme.

As to quaternary structure, heterodimer of an alpha subunit and a beta subunit. PSII is composed of 1 copy each of membrane proteins PsbA, PsbB, PsbC, PsbD, PsbE, PsbF, PsbH, PsbI, PsbJ, PsbK, PsbL, PsbM, PsbT, PsbX, PsbY, PsbZ, Psb30/Ycf12, at least 3 peripheral proteins of the oxygen-evolving complex and a large number of cofactors. It forms dimeric complexes. Heme b is required as a cofactor. The N-terminus is blocked.

The protein localises to the plastid. It localises to the chloroplast thylakoid membrane. Functionally, this b-type cytochrome is tightly associated with the reaction center of photosystem II (PSII). PSII is a light-driven water:plastoquinone oxidoreductase that uses light energy to abstract electrons from H(2)O, generating O(2) and a proton gradient subsequently used for ATP formation. It consists of a core antenna complex that captures photons, and an electron transfer chain that converts photonic excitation into a charge separation. In Spinacia oleracea (Spinach), this protein is Cytochrome b559 subunit beta.